Reading from the N-terminus, the 206-residue chain is Ion-translocating oxidoreductase complex subunit G (206 aa).

Residues 9 to 29 (GITLALFAAGSTGLTAAINQM) traverse the membrane as a helical segment. Threonine 174 carries the post-translational modification FMN phosphoryl threonine.

It belongs to the RnfG family. As to quaternary structure, the complex is composed of six subunits: RsxA, RsxB, RsxC, RsxD, RsxE and RsxG. FMN is required as a cofactor.

It is found in the cell inner membrane. Part of a membrane-bound complex that couples electron transfer with translocation of ions across the membrane. Required to maintain the reduced state of SoxR. The protein is Ion-translocating oxidoreductase complex subunit G of Escherichia coli O157:H7.